The following is a 111-amino-acid chain: Protein BEX3 (111 aa).

The tract at residues 1 to 63 is disordered; it reads MANIHQENEE…RQINDGMGGD (63 aa). An interaction with p75NTR/NGFR region spans residues 68 to 93; sequence EIFMEEMREIRRKLRELQLRNCLRIL. The interval 68–111 is interaction with 14-3-3 epsilon; sequence EIFMEEMREIRRKLRELQLRNCLRILMGELSNHHDHHDEFCLMP. The Nuclear export signal motif lies at 77–87; that stretch reads IRRKLRELQLR. The segment at 100 to 104 is his cluster; it reads HHDHH. C108 is a binding site for Zn(2+).

Belongs to the BEX family. As to quaternary structure, self-associates. Binds to the DEATH domain of p75NTR/NGFR. Interacts with 14-3-3 epsilon (YWHAE). Interacts with DIABLO/SMAC. Ubiquitinated. Degraded by the proteasome. As to expression, found in ovarian granulosa cells, testis, prostate and seminal vesicle tissue. High levels also detected in liver.

The protein localises to the nucleus. Its subcellular location is the cytoplasm. It localises to the cytosol. In terms of biological role, may be a signaling adapter molecule involved in NGFR/p75NTR-mediated apoptosis induced by NGF. Plays a role in zinc-triggered neuronal death. In absence of reductive stress, acts as a pseudosubstrate for the CRL2(FEM1B) complex: associates with FEM1B via zinc, thereby preventing association between FEM1B and its substrates. This chain is Protein BEX3, found in Homo sapiens (Human).